Here is a 404-residue protein sequence, read N- to C-terminus: tRNA N6-adenosine threonylcarbamoyltransferase, mitochondrial (404 aa).

The N-terminal 27 residues, 1–27, are a transit peptide targeting the mitochondrion; the sequence is MFQSCLPGALRSWSRGVFSTSTRPRLV. Positions 135 and 139 each coordinate a divalent metal cation. Substrate-binding positions include 157–161, Asp-190, Gly-210, Glu-214, 317–318, and Thr-345; these read LVSGG and SN. Residue Asp-346 participates in a divalent metal cation binding.

Belongs to the KAE1 / TsaD family. Monomer. A divalent metal cation is required as a cofactor.

The protein resides in the mitochondrion. It catalyses the reaction L-threonylcarbamoyladenylate + adenosine(37) in tRNA = N(6)-L-threonylcarbamoyladenosine(37) in tRNA + AMP + H(+). Its function is as follows. Required for the formation of a threonylcarbamoyl group on adenosine at position 37 (t(6)A37) in mitochondrial tRNAs that read codons beginning with adenine. Probably involved in the transfer of the threonylcarbamoyl moiety of threonylcarbamoyl-AMP (TC-AMP) to the N6 group of A37. Involved in mitochondrial genome maintenance. This is tRNA N6-adenosine threonylcarbamoyltransferase, mitochondrial from Danio rerio (Zebrafish).